Here is a 414-residue protein sequence, read N- to C-terminus: Putative truncated GMC-type inactive oxidoreductase R832 (414 aa).

Positions 1 to 20 (MNPTKLFLVFVAFAFAIINA) are cleaved as a signal peptide. 38–67 (DYIIVGSGPGGSRAVQQCIAKGHKCTLVER) is an FAD binding site.

It belongs to the GMC oxidoreductase family. FAD serves as cofactor.

This is Putative truncated GMC-type inactive oxidoreductase R832 from Acanthamoeba polyphaga (Amoeba).